The sequence spans 249 residues: Pleckstrin homology domain-containing family F member 2 (249 aa).

The region spanning valine 35–serine 131 is the PH domain. Residues aspartate 152 to serine 212 form an FYVE-type zinc finger. 8 residues coordinate Zn(2+): cysteine 158, cysteine 161, cysteine 175, cysteine 178, cysteine 183, cysteine 186, cysteine 204, and cysteine 207. Residues cysteine 219–lysine 232 show a composition bias toward polar residues. Positions cysteine 219–aspartate 249 are disordered. Residues alanine 238–aspartate 249 are compositionally biased toward acidic residues.

It is found in the early endosome membrane. It localises to the endoplasmic reticulum. May play a role in early endosome fusion upstream of RAB5, hence regulating receptor trafficking and fluid-phase transport. Enhances cellular sensitivity to TNF-induced apoptosis. This Gallus gallus (Chicken) protein is Pleckstrin homology domain-containing family F member 2 (PLEKHF2).